The following is a 456-amino-acid chain: Cysteine--tRNA ligase (456 aa).

C28 lines the Zn(2+) pocket. The 'HIGH' region signature appears at 30 to 40 (ITVYDHCHLGH). Zn(2+)-binding residues include C209, H234, and E238. A 'KMSKS' region motif is present at residues 266-270 (KMAKS). Residue K269 coordinates ATP.

The protein belongs to the class-I aminoacyl-tRNA synthetase family. Monomer. Zn(2+) is required as a cofactor.

The protein resides in the cytoplasm. It catalyses the reaction tRNA(Cys) + L-cysteine + ATP = L-cysteinyl-tRNA(Cys) + AMP + diphosphate. The protein is Cysteine--tRNA ligase of Legionella pneumophila subsp. pneumophila (strain Philadelphia 1 / ATCC 33152 / DSM 7513).